Reading from the N-terminus, the 123-residue chain is Small ribosomal subunit protein uS12 (123 aa).

The disordered stretch occupies residues 1 to 21 (MPTIEQLVRKGRQAKPKKSKT). Over residues 9 to 20 (RKGRQAKPKKSK) the composition is skewed to basic residues. The residue at position 89 (Asp-89) is a 3-methylthioaspartic acid.

The protein belongs to the universal ribosomal protein uS12 family. Part of the 30S ribosomal subunit. Contacts proteins S8 and S17. May interact with IF1 in the 30S initiation complex.

Functionally, with S4 and S5 plays an important role in translational accuracy. In terms of biological role, interacts with and stabilizes bases of the 16S rRNA that are involved in tRNA selection in the A site and with the mRNA backbone. Located at the interface of the 30S and 50S subunits, it traverses the body of the 30S subunit contacting proteins on the other side and probably holding the rRNA structure together. The combined cluster of proteins S8, S12 and S17 appears to hold together the shoulder and platform of the 30S subunit. This Bifidobacterium longum subsp. infantis (strain ATCC 15697 / DSM 20088 / JCM 1222 / NCTC 11817 / S12) protein is Small ribosomal subunit protein uS12.